Reading from the N-terminus, the 580-residue chain is Protein O-linked-mannose beta-1,4-N-acetylglucosaminyltransferase 2 (580 aa).

Topologically, residues 1 to 4 (MHLS) are cytoplasmic. A helical; Signal-anchor for type II membrane protein transmembrane segment spans residues 5 to 25 (AVLNALLVSVLAAVLWKHVRL). Over 26–580 (REHAASLEEE…PFADVLVCST (555 aa)) the chain is Lumenal. Asn-99 and Asn-276 each carry an N-linked (GlcNAc...) asparagine glycan. Residues 488–580 (ARCQASVQGA…PFADVLVCST (93 aa)) enclose the Fibronectin type-III domain.

The protein belongs to the glycosyltransferase 61 family.

The protein resides in the endoplasmic reticulum membrane. It catalyses the reaction 3-O-(alpha-D-mannosyl)-L-threonyl-[protein] + UDP-N-acetyl-alpha-D-glucosamine = 3-O-(N-acetyl-beta-D-glucosaminyl-(1-&gt;4)-alpha-D-mannosyl)-L-threonyl-[protein] + UDP + H(+). The protein operates within protein modification; protein glycosylation. O-linked mannose beta-1,4-N-acetylglucosaminyltransferase that transfers UDP-N-acetyl-D-glucosamine to the 4-position of the mannose to generate N-acetyl-D-glucosamine-beta-1,4-O-D-mannosylprotein. Involved in the biosynthesis of the phosphorylated O-mannosyl trisaccharide (N-acetylgalactosamine-beta-3-N-acetylglucosamine-beta-4-(phosphate-6-)mannose), a carbohydrate structure present in alpha-dystroglycan (DAG1), which is required for binding laminin G-like domain-containing extracellular proteins with high affinity. The protein is Protein O-linked-mannose beta-1,4-N-acetylglucosaminyltransferase 2 (POMGNT2) of Bos taurus (Bovine).